The sequence spans 131 residues: Steroid Delta-isomerase (131 aa).

The Proton donor role is filled by tyrosine 16. The Proton acceptor role is filled by aspartate 40. Residue aspartate 103 participates in substrate binding.

Homodimer.

It carries out the reaction a 3-oxo-Delta(5)-steroid = a 3-oxo-Delta(4)-steroid. The chain is Steroid Delta-isomerase (ksi) from Pseudomonas putida (Arthrobacter siderocapsulatus).